A 147-amino-acid polypeptide reads, in one-letter code: Fluoride-specific ion channel FluC 1 (147 aa).

4 consecutive transmembrane segments (helical) span residues 29-49, 61-81, 90-110, and 118-138; these read YVYI…ISFL, IANL…IAFF, AITT…LELI, and FITL…LCYV. Gly97 and Thr100 together coordinate Na(+).

It belongs to the fluoride channel Fluc/FEX (TC 1.A.43) family.

The protein resides in the cell membrane. The catalysed reaction is fluoride(in) = fluoride(out). With respect to regulation, na(+) is not transported, but it plays an essential structural role and its presence is essential for fluoride channel function. Functionally, fluoride-specific ion channel. Important for reducing fluoride concentration in the cell, thus reducing its toxicity. The sequence is that of Fluoride-specific ion channel FluC 1 from Staphylococcus aureus (strain MRSA252).